The sequence spans 353 residues: Uroporphyrinogen decarboxylase (353 aa).

Substrate is bound by residues 35-39 (RQAGR), Phe-54, Asp-84, Tyr-160, Ser-215, and His-329.

Belongs to the uroporphyrinogen decarboxylase family. Homodimer.

The protein resides in the cytoplasm. The enzyme catalyses uroporphyrinogen III + 4 H(+) = coproporphyrinogen III + 4 CO2. It functions in the pathway porphyrin-containing compound metabolism; protoporphyrin-IX biosynthesis; coproporphyrinogen-III from 5-aminolevulinate: step 4/4. Functionally, catalyzes the decarboxylation of four acetate groups of uroporphyrinogen-III to yield coproporphyrinogen-III. In Staphylococcus epidermidis (strain ATCC 12228 / FDA PCI 1200), this protein is Uroporphyrinogen decarboxylase.